A 2251-amino-acid polypeptide reads, in one-letter code: U3 small nucleolar RNA-associated protein 10 (2251 aa).

One copy of the HEAT repeat lies at 945–983; sequence VVPLLLTALADAEAAIRLAAIACLAHILAICKYAGDLAK. 2 helical membrane passes run 962–982 and 1460–1480; these read LAAI…GDLA and LLVD…LLVD.

The protein belongs to the HEATR1/UTP10 family. As to quaternary structure, component of the ribosomal small subunit (SSU) processome.

Its subcellular location is the nucleus. The protein resides in the nucleolus. It localises to the membrane. Functionally, involved in nucleolar processing of pre-18S ribosomal RNA. Involved in ribosome biosynthesis. The sequence is that of U3 small nucleolar RNA-associated protein 10 from Mycosarcoma maydis (Corn smut fungus).